The primary structure comprises 267 residues: Diacetylchitobiose deacetylase (267 aa).

This sequence belongs to the PIGL family. Homohexamer.

The protein resides in the cytoplasm. It catalyses the reaction N,N'-diacetylchitobiose + H2O = beta-D-glucosaminyl-(1-&gt;4)-N-acetyl-D-glucosamine + acetate. The protein operates within glycan degradation; chitin degradation. Deacylates the non-reducing end of diacetylchitobiose (GlcNAc2). Can also use N-acetylglucosamine (GlcNAc) and N-acetylchitotriose (GlcNAc3). Probably involved in chitin degradation. The sequence is that of Diacetylchitobiose deacetylase (dac) from Thermococcus kodakarensis (strain ATCC BAA-918 / JCM 12380 / KOD1) (Pyrococcus kodakaraensis (strain KOD1)).